We begin with the raw amino-acid sequence, 294 residues long: Pyridoxal 5'-phosphate synthase subunit PdxS (294 aa).

Asp-24 provides a ligand contact to D-ribose 5-phosphate. The active-site Schiff-base intermediate with D-ribose 5-phosphate is the Lys-81. Gly-153 contributes to the D-ribose 5-phosphate binding site. Residue Arg-165 coordinates D-glyceraldehyde 3-phosphate. D-ribose 5-phosphate contacts are provided by residues Gly-214 and 235 to 236 (GS).

This sequence belongs to the PdxS/SNZ family. As to quaternary structure, in the presence of PdxT, forms a dodecamer of heterodimers.

The catalysed reaction is aldehydo-D-ribose 5-phosphate + D-glyceraldehyde 3-phosphate + L-glutamine = pyridoxal 5'-phosphate + L-glutamate + phosphate + 3 H2O + H(+). Its pathway is cofactor biosynthesis; pyridoxal 5'-phosphate biosynthesis. In terms of biological role, catalyzes the formation of pyridoxal 5'-phosphate from ribose 5-phosphate (RBP), glyceraldehyde 3-phosphate (G3P) and ammonia. The ammonia is provided by the PdxT subunit. Can also use ribulose 5-phosphate and dihydroxyacetone phosphate as substrates, resulting from enzyme-catalyzed isomerization of RBP and G3P, respectively. This Anoxybacillus flavithermus (strain DSM 21510 / WK1) protein is Pyridoxal 5'-phosphate synthase subunit PdxS.